The sequence spans 514 residues: Cholesterol side-chain cleavage enzyme, mitochondrial (514 aa).

The transit peptide at 1–39 (MMVSWSVCRSSLALPACGLPSARHNSSMPVVRQALSPDN) directs the protein to the mitochondrion. C458 lines the heme pocket.

It belongs to the cytochrome P450 family. Requires heme as cofactor. In terms of tissue distribution, in the ovary, not found in early vitellogenic follicles, barely detected in postvitellogenic follicles and abundant in post-ovulatory follicles.

It is found in the mitochondrion inner membrane. The enzyme catalyses 6 reduced [adrenodoxin] + cholesterol + 3 O2 + 6 H(+) = 4-methylpentanal + pregnenolone + 6 oxidized [adrenodoxin] + 4 H2O. The protein operates within lipid metabolism; C21-steroid hormone metabolism. Functionally, catalyzes the side-chain cleavage reaction of cholesterol to pregnenolone, the precursor of most steroid hormones. The protein is Cholesterol side-chain cleavage enzyme, mitochondrial (cyp11a1) of Oncorhynchus mykiss (Rainbow trout).